Here is a 426-residue protein sequence, read N- to C-terminus: 3-phosphoshikimate 1-carboxyvinyltransferase (426 aa).

3 residues coordinate 3-phosphoshikimate: K22, S23, and R27. Position 22 (K22) interacts with phosphoenolpyruvate. G96 and R124 together coordinate phosphoenolpyruvate. S170, S171, Q172, S198, D314, N337, and K341 together coordinate 3-phosphoshikimate. Q172 serves as a coordination point for phosphoenolpyruvate. The active-site Proton acceptor is D314. Residues R345, R387, and K412 each contribute to the phosphoenolpyruvate site.

Belongs to the EPSP synthase family. In terms of assembly, monomer.

It localises to the cytoplasm. The enzyme catalyses 3-phosphoshikimate + phosphoenolpyruvate = 5-O-(1-carboxyvinyl)-3-phosphoshikimate + phosphate. It functions in the pathway metabolic intermediate biosynthesis; chorismate biosynthesis; chorismate from D-erythrose 4-phosphate and phosphoenolpyruvate: step 6/7. Its function is as follows. Catalyzes the transfer of the enolpyruvyl moiety of phosphoenolpyruvate (PEP) to the 5-hydroxyl of shikimate-3-phosphate (S3P) to produce enolpyruvyl shikimate-3-phosphate and inorganic phosphate. This chain is 3-phosphoshikimate 1-carboxyvinyltransferase, found in Photobacterium damsela subsp. piscicida (Pasteurella piscicida).